The following is a 916-amino-acid chain: Translation initiation factor IF-2 (916 aa).

Residues 1–325 (MTDSNDDKTL…QEKFRRSQVQ (325 aa)) are disordered. Over residues 60 to 91 (ITPATPAAPVRAAEPAPAPAQARPQQSTPAPR) the composition is skewed to low complexity. A compositionally biased stretch (polar residues) spans 97–108 (GQANQRPQQSYQ). Residues 125 to 182 (SPEEMDARRRALAESQARDAQDAIRRAEEEKRRAAEEAVRKAAEAEEAARRAVEEAAR) are compositionally biased toward basic and acidic residues. Composition is skewed to low complexity over residues 183–209 (QAEA…AEAR) and 229–243 (DGAA…PAAV). Residues 414–581 (SRPPVVTIMG…AVLLQAEILD (168 aa)) form the tr-type G domain. The segment at 423-430 (GHVDHGKT) is G1. Residue 423 to 430 (GHVDHGKT) participates in GTP binding. The interval 448-452 (GITQH) is G2. The tract at residues 469 to 472 (DTPG) is G3. GTP-binding positions include 469 to 473 (DTPGH) and 523 to 526 (NKID). The tract at residues 523 to 526 (NKID) is G4. The G5 stretch occupies residues 559–561 (SAK).

It belongs to the TRAFAC class translation factor GTPase superfamily. Classic translation factor GTPase family. IF-2 subfamily.

Its subcellular location is the cytoplasm. One of the essential components for the initiation of protein synthesis. Protects formylmethionyl-tRNA from spontaneous hydrolysis and promotes its binding to the 30S ribosomal subunits. Also involved in the hydrolysis of GTP during the formation of the 70S ribosomal complex. In Rhizobium etli (strain ATCC 51251 / DSM 11541 / JCM 21823 / NBRC 15573 / CFN 42), this protein is Translation initiation factor IF-2.